A 416-amino-acid polypeptide reads, in one-letter code: Multifunctional CCA protein (416 aa).

The ATP site is built by glycine 8 and arginine 11. CTP-binding residues include glycine 8 and arginine 11. Residues aspartate 21 and aspartate 23 each contribute to the Mg(2+) site. ATP is bound by residues arginine 91, arginine 137, and arginine 140. Residues arginine 91, arginine 137, and arginine 140 each contribute to the CTP site. The HD domain occupies 228–335; sequence SFIHTMLVLK…ITLFNRFDVW (108 aa).

It belongs to the tRNA nucleotidyltransferase/poly(A) polymerase family. Bacterial CCA-adding enzyme type 1 subfamily. In terms of assembly, monomer. Can also form homodimers and oligomers. Requires Mg(2+) as cofactor. Ni(2+) serves as cofactor.

The catalysed reaction is a tRNA precursor + 2 CTP + ATP = a tRNA with a 3' CCA end + 3 diphosphate. It carries out the reaction a tRNA with a 3' CCA end + 2 CTP + ATP = a tRNA with a 3' CCACCA end + 3 diphosphate. Catalyzes the addition and repair of the essential 3'-terminal CCA sequence in tRNAs without using a nucleic acid template. Adds these three nucleotides in the order of C, C, and A to the tRNA nucleotide-73, using CTP and ATP as substrates and producing inorganic pyrophosphate. tRNA 3'-terminal CCA addition is required both for tRNA processing and repair. Also involved in tRNA surveillance by mediating tandem CCA addition to generate a CCACCA at the 3' terminus of unstable tRNAs. While stable tRNAs receive only 3'-terminal CCA, unstable tRNAs are marked with CCACCA and rapidly degraded. In Haemophilus influenzae (strain PittGG), this protein is Multifunctional CCA protein.